The primary structure comprises 498 residues: Glycerol kinase (498 aa).

Residue threonine 14 participates in ADP binding. Threonine 14, threonine 15, and serine 16 together coordinate ATP. Threonine 14 contributes to the sn-glycerol 3-phosphate binding site. Arginine 18 contacts ADP. Residues arginine 84, glutamate 85, tyrosine 136, and aspartate 245 each contribute to the sn-glycerol 3-phosphate site. Glycerol is bound by residues arginine 84, glutamate 85, tyrosine 136, aspartate 245, and glutamine 246. Residues threonine 267 and glycine 310 each contribute to the ADP site. ATP-binding residues include threonine 267, glycine 310, glutamine 314, and glycine 410. Positions 410 and 414 each coordinate ADP.

Belongs to the FGGY kinase family.

It carries out the reaction glycerol + ATP = sn-glycerol 3-phosphate + ADP + H(+). It participates in polyol metabolism; glycerol degradation via glycerol kinase pathway; sn-glycerol 3-phosphate from glycerol: step 1/1. With respect to regulation, inhibited by fructose 1,6-bisphosphate (FBP). Its function is as follows. Key enzyme in the regulation of glycerol uptake and metabolism. Catalyzes the phosphorylation of glycerol to yield sn-glycerol 3-phosphate. This Rhodospirillum centenum (strain ATCC 51521 / SW) protein is Glycerol kinase.